Here is a 255-residue protein sequence, read N- to C-terminus: Complement C1q-like protein 3 (255 aa).

A signal peptide spans 1-20 (MVLLLVILIPVLVSSAGTSA). Residues 39–109 (KAPSTAATPD…GLPGPPGAPG (71 aa)) form a disordered region. The Collagen-like domain occupies 61-111 (GPKGEAGRPGKAGPRGPPGEPGPPGPMGPPGEKGEPGRQGLPGPPGAPGLN). A compositionally biased stretch (pro residues) spans 75–89 (RGPPGEPGPPGPMGP). In terms of domain architecture, C1q spans 122–255 (STVPKIAFYA…TFSGFIIYAD (134 aa)).

In terms of assembly, forms homooligomers. Interacts with ADGRB3. Interacts with C1QL2 and C1QL4, when proteins are coexpressed; this interaction does not occur after secretion. In terms of tissue distribution, highly expressed in adipose tissue, with expression levels at least 2 orders of magnitude higher than in other tissues, including brain and kidney.

It is found in the secreted. May regulate the number of excitatory synapses that are formed on hippocampus neurons. Has no effect on inhibitory synapses. Plays a role in glucose homeostasis. Via AMPK signaling pathway, stimulates glucose uptake in adipocytes, myotubes and hepatocytes and enhances insulin-stimulated glucose uptake. In a hepatoma cell line, reduces the expression of gluconeogenic enzymes G6PC1 and PCK1 and hence decreases de novo glucose production. The protein is Complement C1q-like protein 3 (C1QL3) of Homo sapiens (Human).